Reading from the N-terminus, the 396-residue chain is Probable splicing factor YJU2B (396 aa).

Positions 1-26 (MGERKGVNKYYPPDFNPEKHGSLNRY) are disordered. Position 40 is a phosphoserine (Ser40). The stretch at 182-214 (LNSMLRRRFREKKKAIQEEEERDQALQAKASLT) forms a coiled coil. A disordered region spans residues 295–396 (IVRRRSRDVP…VADYSDSESE (102 aa)). Ser306 bears the Phosphoserine mark. Residues 315 to 327 (KSGEPRVPEEAAQ) show a composition bias toward basic and acidic residues. Over residues 340-350 (TTETPKCSSPR) the composition is skewed to polar residues. Ser362 carries the phosphoserine modification.

This sequence belongs to the CWC16 family.

It is found in the nucleus. Its function is as follows. May be involved in mRNA splicing. This Homo sapiens (Human) protein is Probable splicing factor YJU2B.